A 283-amino-acid polypeptide reads, in one-letter code: Putative aquaporin NIP4-1 (283 aa).

Position 1 is an N-acetylmethionine (M1). Helical transmembrane passes span 45–65 (LIAEMIGTYFIVFSGCGVVVV) and 70–90 (GGTITFPGICVTWGLIVMVMI). An NPA 1 motif is present at residues 102–104 (NPA). A run of 3 helical transmembrane segments spans residues 122–142 (LYIGAQFAGSLLASLTLRLMF), 161–181 (ALVAEIIISFLLMFVISGVAT), and 189–209 (LAGIAVGMTIMVNVFVAGPIS). The NPA 2 signature appears at 214–216 (NPA). The helical transmembrane segment at 231 to 251 (IWVYIVGPVLGVISGGFVYNL) threads the bilayer. At S267 the chain carries Phosphoserine.

This sequence belongs to the MIP/aquaporin (TC 1.A.8) family. NIP (TC 1.A.8.12) subfamily.

It is found in the membrane. Its function is as follows. Potential aquaporin, which may facilitate the transport of water and small neutral solutes across cell membranes. In Arabidopsis thaliana (Mouse-ear cress), this protein is Putative aquaporin NIP4-1 (NIP4-1).